The chain runs to 292 residues: MNNHFKCIGIVGHPRHPTALTTHEMLYRWLCTKGYEVIVEQQIAHELQLKNVKTGTLAEIGQLADLAVVVGGDGNMLGAARTLARYDIKVIGINRGNLGFLTDLDPDNAQQQLADVLEGHYISEKRFLLEAQVCQQDCQKRISTAINEVVLHPGKVAHMIEFEVYIDEIFAFSQRSDGLIISTPTGSTAYSLSAGGPILTPSLDAITLVPMFPHTLSARPLVINSSSTIRLRFSHRRNDLEISCDSQIALPIQEGEDVLIRRCDYHLNLIHPKDYSYFNTLSTKLGWSKKLF.

Residue Asp-73 is the Proton acceptor of the active site. Residues 73 to 74 (DG), 147 to 148 (NE), His-158, Arg-175, Asp-177, 188 to 193 (TAYSLS), and Gln-247 each bind NAD(+).

Belongs to the NAD kinase family. A divalent metal cation serves as cofactor.

The protein localises to the cytoplasm. It carries out the reaction NAD(+) + ATP = ADP + NADP(+) + H(+). Involved in the regulation of the intracellular balance of NAD and NADP, and is a key enzyme in the biosynthesis of NADP. Catalyzes specifically the phosphorylation on 2'-hydroxyl of the adenosine moiety of NAD to yield NADP. The polypeptide is NAD kinase (Shigella boydii serotype 18 (strain CDC 3083-94 / BS512)).